Consider the following 190-residue polypeptide: UPF0301 protein RSc0675 (190 aa).

This sequence belongs to the UPF0301 (AlgH) family.

This Ralstonia nicotianae (strain ATCC BAA-1114 / GMI1000) (Ralstonia solanacearum) protein is UPF0301 protein RSc0675.